The sequence spans 165 residues: Regulator of sigma D (165 aa).

The protein belongs to the Rsd/AlgQ family. In terms of assembly, interacts with RpoD.

It localises to the cytoplasm. Its function is as follows. Binds RpoD and negatively regulates RpoD-mediated transcription activation by preventing the interaction between the primary sigma factor RpoD with the catalytic core of the RNA polymerase and with promoter DNA. May be involved in replacement of the RNA polymerase sigma subunit from RpoD to RpoS during the transition from exponential growth to the stationary phase. This chain is Regulator of sigma D, found in Enterobacter sp. (strain 638).